Here is a 261-residue protein sequence, read N- to C-terminus: tRNA threonylcarbamoyladenosine dehydratase (261 aa).

Residues 230–250 (CANGFGAATMITATFGFFAVS) traverse the membrane as a helical segment.

This sequence belongs to the HesA/MoeB/ThiF family.

It localises to the membrane. In terms of biological role, catalyzes the ATP-dependent dehydration of threonylcarbamoyladenosine at position 37 (t(6)A37) to form cyclic t(6)A37 (ct(6)A37) in tRNAs that read codons beginning with adenine. The chain is tRNA threonylcarbamoyladenosine dehydratase (tcdA) from Haemophilus influenzae (strain ATCC 51907 / DSM 11121 / KW20 / Rd).